The primary structure comprises 164 residues: Large ribosomal subunit protein uL10 (164 aa).

It belongs to the universal ribosomal protein uL10 family. In terms of assembly, part of the ribosomal stalk of the 50S ribosomal subunit. The N-terminus interacts with L11 and the large rRNA to form the base of the stalk. The C-terminus forms an elongated spine to which L12 dimers bind in a sequential fashion forming a multimeric L10(L12)X complex.

In terms of biological role, forms part of the ribosomal stalk, playing a central role in the interaction of the ribosome with GTP-bound translation factors. The polypeptide is Large ribosomal subunit protein uL10 (Aliivibrio salmonicida (strain LFI1238) (Vibrio salmonicida (strain LFI1238))).